Consider the following 533-residue polypeptide: tRNA(Ile)-lysidine synthase (533 aa).

21–26 (SGGADS) contributes to the ATP binding site. Residues 377-500 (DLLDTAMGEA…DLLSSHWGHV (124 aa)) enclose the CMP/dCMP-type deaminase domain.

This sequence belongs to the tRNA(Ile)-lysidine synthase family.

It is found in the cytoplasm. It catalyses the reaction cytidine(34) in tRNA(Ile2) + L-lysine + ATP = lysidine(34) in tRNA(Ile2) + AMP + diphosphate + H(+). In terms of biological role, ligates lysine onto the cytidine present at position 34 of the AUA codon-specific tRNA(Ile) that contains the anticodon CAU, in an ATP-dependent manner. Cytidine is converted to lysidine, thus changing the amino acid specificity of the tRNA from methionine to isoleucine. In Deinococcus deserti (strain DSM 17065 / CIP 109153 / LMG 22923 / VCD115), this protein is tRNA(Ile)-lysidine synthase.